A 746-amino-acid chain; its full sequence is Polyribonucleotide nucleotidyltransferase (746 aa).

2 residues coordinate Mg(2+): Asp-490 and Asp-496. The 63-residue stretch at Pro-557 to Ile-619 folds into the KH domain. The region spanning Gly-629–Lys-699 is the S1 motif domain. The segment at Leu-701–Asp-746 is disordered. Residues Glu-706 to Asp-746 are compositionally biased toward basic and acidic residues.

The protein belongs to the polyribonucleotide nucleotidyltransferase family. The cofactor is Mg(2+).

Its subcellular location is the cytoplasm. It carries out the reaction RNA(n+1) + phosphate = RNA(n) + a ribonucleoside 5'-diphosphate. In terms of biological role, involved in mRNA degradation. Catalyzes the phosphorolysis of single-stranded polyribonucleotides processively in the 3'- to 5'-direction. In Parabacteroides distasonis (strain ATCC 8503 / DSM 20701 / CIP 104284 / JCM 5825 / NCTC 11152), this protein is Polyribonucleotide nucleotidyltransferase.